Consider the following 229-residue polypeptide: Adenylate kinase (229 aa).

10–15 (GSGKGT) is an ATP binding site. An NMP region spans residues 30–59 (ESGVIFREHISKGTELGKQAKSYIDKGELV). Residues serine 31, arginine 36, 57 to 59 (ELV), 84 to 87 (GFPR), and glutamine 91 contribute to the AMP site. An LID region spans residues 125 to 164 (GRRICKTNNNHPNNVSIDSIKPDGNNCRVCHGELIVRTDD). Arginine 126 contributes to the ATP binding site. Arginine 161 and arginine 173 together coordinate AMP. Asparagine 209 lines the ATP pocket.

Belongs to the adenylate kinase family. In terms of assembly, monomer.

It localises to the cytoplasm. The catalysed reaction is AMP + ATP = 2 ADP. It functions in the pathway purine metabolism; AMP biosynthesis via salvage pathway; AMP from ADP: step 1/1. Functionally, catalyzes the reversible transfer of the terminal phosphate group between ATP and AMP. Plays an important role in cellular energy homeostasis and in adenine nucleotide metabolism. The sequence is that of Adenylate kinase from Lawsonia intracellularis (strain PHE/MN1-00).